Reading from the N-terminus, the 644-residue chain is Sentrin-specific protease 1 (644 aa).

The tract at residues 1 to 200 is interaction with CCAR2; it reads MDDIADRMRM…REIYRQLLQM (200 aa). A phosphoserine mark is found at Ser-57, Ser-117, Ser-132, and Ser-157. Residues 92-117 form a disordered region; sequence QSANGQWRNSTPSSSSSLQKSRNSRS. Over residues 99-117 the composition is skewed to low complexity; it reads RNSTPSSSSSLQKSRNSRS. Disordered stretches follow at residues 156–184 and 283–312; these read PSPS…TAEE and SKDS…NTQS. The Nuclear localization signal motif lies at 171-177; it reads PKKTQRR. Residues 450–613 form a protease region; the sequence is LTITRKDIQT…GMFACKYADC (164 aa). Residues His-533 and Asp-550 contribute to the active site. A Nuclear localization signal motif is present at residues 574-577; that stretch reads KKRK. Cys-603 acts as the Nucleophile in catalysis. Positions 628–634 match the Nuclear localization signal motif; the sequence is PYFRKRM. The short motif at 635-644 is the Nuclear export signal element; that stretch reads VWEILHRKLL.

This sequence belongs to the peptidase C48 family. In terms of assembly, interacts with RBM33; promoting ALKBH5 desumoylation and subsequent activation. As to expression, highly expressed in testis. Expressed at lower levels in thymus, pancreas, spleen, liver, ovary and small intestine.

It localises to the nucleus. The protein localises to the cytoplasm. Functionally, protease that catalyzes two essential functions in the SUMO pathway. The first is the hydrolysis of an alpha-linked peptide bond at the C-terminal end of the small ubiquitin-like modifier (SUMO) propeptides, SUMO1, SUMO2 and SUMO3 leading to the mature form of the proteins. The second is the deconjugation of SUMO1, SUMO2 and SUMO3 from targeted proteins, by cleaving an epsilon-linked peptide bond between the C-terminal glycine of the mature SUMO and the lysine epsilon-amino group of the target protein. Deconjugates SUMO1 from HIPK2. Deconjugates SUMO1 from HDAC1 and BHLHE40/DEC1, which decreases its transcriptional repression activity. Deconjugates SUMO1 from CLOCK, which decreases its transcriptional activation activity. Deconjugates SUMO2 from MTA1. Inhibits N(6)-methyladenosine (m6A) RNA methylation by mediating SUMO1 deconjugation from METTL3 and ALKBH5: METTL3 inhibits the m6A RNA methyltransferase activity, while ALKBH5 desumoylation promotes m6A demethylation. Desumoylates CCAR2 which decreases its interaction with SIRT1. Deconjugates SUMO1 from GPS2. This chain is Sentrin-specific protease 1 (SENP1), found in Homo sapiens (Human).